An 87-amino-acid chain; its full sequence is Small ribosomal subunit protein bS20 (87 aa).

Residues 1-11 (MANIKSAKKRA) are compositionally biased toward basic residues. The interval 1-27 (MANIKSAKKRAVQSEKRRQHNASQRSM) is disordered.

Belongs to the bacterial ribosomal protein bS20 family.

Functionally, binds directly to 16S ribosomal RNA. This Histophilus somni (strain 129Pt) (Haemophilus somnus) protein is Small ribosomal subunit protein bS20.